The sequence spans 360 residues: Peptide chain release factor 1 (360 aa).

The residue at position 237 (Gln237) is an N5-methylglutamine.

The protein belongs to the prokaryotic/mitochondrial release factor family. In terms of processing, methylated by PrmC. Methylation increases the termination efficiency of RF1.

The protein localises to the cytoplasm. Functionally, peptide chain release factor 1 directs the termination of translation in response to the peptide chain termination codons UAG and UAA. The sequence is that of Peptide chain release factor 1 from Pseudomonas putida (strain ATCC 700007 / DSM 6899 / JCM 31910 / BCRC 17059 / LMG 24140 / F1).